A 624-amino-acid chain; its full sequence is Protein NRT1/ PTR FAMILY 6.1 (624 aa).

The segment at Met1–Ser20 is disordered. Transmembrane regions (helical) follow at residues Met83–Met100 and Phe114–Gly134. At Thr138 the chain carries Phosphothreonine. 10 helical membrane-spanning segments follow: residues Ile139 to Leu159, Ser184 to Ile204, Phe230 to Val250, Trp258 to Ala278, Leu378 to Leu398, Val422 to Ile442, Val459 to Tyr479, Trp504 to Leu524, Ser537 to Leu557, and Cys585 to Ala605.

The protein belongs to the major facilitator superfamily. Proton-dependent oligopeptide transporter (POT/PTR) (TC 2.A.17) family. In terms of tissue distribution, expressed in flower and siliques.

The protein localises to the membrane. The polypeptide is Protein NRT1/ PTR FAMILY 6.1 (NPF6.1) (Arabidopsis thaliana (Mouse-ear cress)).